The following is an 84-amino-acid chain: Omega-conotoxin-like ArMKLT1-02 (84 aa).

The first 22 residues, 1-22, serve as a signal peptide directing secretion; it reads MKVTCMMIVAVLFLTAWTFVTA. Residues 23–51 constitute a propeptide that is removed on maturation; it reads DDSISALEDLFAKAHDKMENSEASPLNER. 3 disulfides stabilise this stretch: Cys-53/Cys-71, Cys-60/Cys-75, and Cys-70/Cys-79.

This sequence belongs to the conotoxin O1 superfamily. In terms of tissue distribution, expressed by the venom duct.

It localises to the secreted. Its function is as follows. Omega-conotoxins act at presynaptic membranes, they bind and block voltage-gated calcium channels (Cav). The sequence is that of Omega-conotoxin-like ArMKLT1-02 from Conus arenatus (Sand-dusted cone).